A 161-amino-acid chain; its full sequence is Small ribosomal subunit protein uS9 (161 aa).

2 disordered regions span residues M1–A27 and K142–R161.

The protein belongs to the universal ribosomal protein uS9 family.

The protein is Small ribosomal subunit protein uS9 of Clavibacter michiganensis subsp. michiganensis (strain NCPPB 382).